The primary structure comprises 416 residues: Serine hydroxymethyltransferase (416 aa).

(6S)-5,6,7,8-tetrahydrofolate contacts are provided by residues L118 and 122-124 (GHL). An N6-(pyridoxal phosphate)lysine modification is found at K226. E242 lines the (6S)-5,6,7,8-tetrahydrofolate pocket.

The protein belongs to the SHMT family. Homodimer. Pyridoxal 5'-phosphate serves as cofactor.

It is found in the cytoplasm. It carries out the reaction (6R)-5,10-methylene-5,6,7,8-tetrahydrofolate + glycine + H2O = (6S)-5,6,7,8-tetrahydrofolate + L-serine. It participates in one-carbon metabolism; tetrahydrofolate interconversion. It functions in the pathway amino-acid biosynthesis; glycine biosynthesis; glycine from L-serine: step 1/1. Functionally, catalyzes the reversible interconversion of serine and glycine with tetrahydrofolate (THF) serving as the one-carbon carrier. This reaction serves as the major source of one-carbon groups required for the biosynthesis of purines, thymidylate, methionine, and other important biomolecules. Also exhibits THF-independent aldolase activity toward beta-hydroxyamino acids, producing glycine and aldehydes, via a retro-aldol mechanism. The chain is Serine hydroxymethyltransferase from Helicobacter pylori (strain J99 / ATCC 700824) (Campylobacter pylori J99).